A 153-amino-acid polypeptide reads, in one-letter code: Transcriptional repressor NrdR 2 (153 aa).

A zinc finger spans residues 3 to 34; that stretch reads CPFCGQDDTQVKDSRPTDDNAAIRRRRACPGC. The ATP-cone domain occupies 49-139; the sequence is LVVVKKDGSR…VYRNFREAKD (91 aa).

This sequence belongs to the NrdR family. The cofactor is Zn(2+).

Its function is as follows. Negatively regulates transcription of bacterial ribonucleotide reductase nrd genes and operons by binding to NrdR-boxes. This chain is Transcriptional repressor NrdR 2, found in Paramagnetospirillum magneticum (strain ATCC 700264 / AMB-1) (Magnetospirillum magneticum).